The following is a 577-amino-acid chain: Aspartate--tRNA(Asp/Asn) ligase (577 aa).

Residue E171 participates in L-aspartate binding. An aspartate region spans residues Q195 to K198. R217 serves as a coordination point for L-aspartate. Residues R217 to E219 and Q226 each bind ATP. H444 serves as a coordination point for L-aspartate. Position 474 (E474) interacts with ATP. R481 lines the L-aspartate pocket. An ATP-binding site is contributed by G526–R529.

This sequence belongs to the class-II aminoacyl-tRNA synthetase family. Type 1 subfamily. As to quaternary structure, homodimer.

It is found in the cytoplasm. The enzyme catalyses tRNA(Asx) + L-aspartate + ATP = L-aspartyl-tRNA(Asx) + AMP + diphosphate. Its function is as follows. Aspartyl-tRNA synthetase with relaxed tRNA specificity since it is able to aspartylate not only its cognate tRNA(Asp) but also tRNA(Asn). Reaction proceeds in two steps: L-aspartate is first activated by ATP to form Asp-AMP and then transferred to the acceptor end of tRNA(Asp/Asn). The sequence is that of Aspartate--tRNA(Asp/Asn) ligase from Helicobacter pylori (strain P12).